Reading from the N-terminus, the 274-residue chain is Diaminopimelate epimerase (274 aa).

Residues N11, Q44, and N64 each coordinate substrate. C73 (proton donor) is an active-site residue. Substrate contacts are provided by residues 74-75, N157, N190, and 208-209; these read GN and ER. The Proton acceptor role is filled by C217. A substrate-binding site is contributed by 218–219; that stretch reads GS.

Belongs to the diaminopimelate epimerase family. In terms of assembly, homodimer.

It localises to the cytoplasm. The enzyme catalyses (2S,6S)-2,6-diaminopimelate = meso-2,6-diaminopimelate. It functions in the pathway amino-acid biosynthesis; L-lysine biosynthesis via DAP pathway; DL-2,6-diaminopimelate from LL-2,6-diaminopimelate: step 1/1. Its function is as follows. Catalyzes the stereoinversion of LL-2,6-diaminopimelate (L,L-DAP) to meso-diaminopimelate (meso-DAP), a precursor of L-lysine and an essential component of the bacterial peptidoglycan. The protein is Diaminopimelate epimerase of Mannheimia succiniciproducens (strain KCTC 0769BP / MBEL55E).